Reading from the N-terminus, the 582-residue chain is Phosphoribosylaminoimidazole carboxylase (582 aa).

One can recognise an ATP-grasp domain in the interval 114-305; the sequence is KKYLAERGVA…QFENHLRAIL (192 aa). Residue 143–200 participates in ATP binding; that stretch reads AGRLGLPLMLKAKTLAYDGRGNSPLKSASSEDIQASLKFLGDRPLYAEGWAPFVKEVA.

This sequence in the C-terminal section; belongs to the AIR carboxylase family. Class I subfamily.

The enzyme catalyses 5-amino-1-(5-phospho-D-ribosyl)imidazole-4-carboxylate + H(+) = 5-amino-1-(5-phospho-beta-D-ribosyl)imidazole + CO2. The protein operates within purine metabolism; IMP biosynthesis via de novo pathway; 5-amino-1-(5-phospho-D-ribosyl)imidazole-4-carboxylate from 5-amino-1-(5-phospho-D-ribosyl)imidazole (carboxylase route): step 1/1. In Cryptococcus neoformans var. neoformans serotype D (strain B-3501A) (Filobasidiella neoformans), this protein is Phosphoribosylaminoimidazole carboxylase (ADE2).